The chain runs to 708 residues: Leukotoxin translocation ATP-binding protein LktB (708 aa).

The 126-residue stretch at 1–126 (MEANHQRNDL…ACYQGQLILV (126 aa)) folds into the Peptidase C39 domain. The 283-residue stretch at 155–437 (FLETLIVSIF…LAQLWQDFQQ (283 aa)) folds into the ABC transmembrane type-1 domain. Transmembrane regions (helical) follow at residues 159–179 (LIVS…FQVV), 192–212 (LNII…LSGL), 270–290 (ALTS…MWYY), 296–316 (LVIL…SPIL), and 389–409 (VMVI…LSIG). The 236-residue stretch at 469-704 (ISFKNIRFRY…SNGLYSYLHQ (236 aa)) folds into the ABC transporter domain. Residue 503-510 (GRSGSGKS) coordinates ATP.

The protein belongs to the ABC transporter superfamily. Protein-1 exporter (TC 3.A.1.109) family. As to quaternary structure, homodimer.

It localises to the cell inner membrane. The enzyme catalyses ATP + H2O + proteinSide 1 = ADP + phosphate + proteinSide 2.. Functionally, part of the ABC transporter complex LktBD involved in leukotoxin export. Transmembrane domains (TMD) form a pore in the inner membrane and the ATP-binding domain (NBD) is responsible for energy generation. The protein is Leukotoxin translocation ATP-binding protein LktB (lktB) of Mannheimia haemolytica (Pasteurella haemolytica).